A 337-amino-acid chain; its full sequence is MGKIKIGINGFGRIGRLVARVALQSDDVELVAVNDPFITTEYMTYMFKYDTVHGHWKHSDIKLKDDKTLLFGEKPVTVFGVRNPEEIPWGEAGADYVVESTGVFTDKDKAAAHLKGGAKKVVISAPSKDAPMFVVGVNEDKYTSDVNIVSNASCTTNCLAPLAKVINDNFGIIEGLMTTVHAITATQKTVDGPSSKDWRGGRAASFNIIPSSTGAAKAVGKVLPELNGKLTGMSFRVPTVDVSVVDLTVRTEKAASYDDIKKAIKAASEGKLKGIMGYVEEDLVSTDFVGDSRSSIFDAKAGIALNDHFVKLVSWYDNEWGYSNRVVDLIRHMAKTQ.

Residues 13-14 (RI), Asp-35, and Arg-82 contribute to the NAD(+) site. Residues 153–155 (SCT), Thr-184, 213–214 (TG), and Arg-236 each bind D-glyceraldehyde 3-phosphate. Residue Cys-154 is the Nucleophile of the active site. An NAD(+)-binding site is contributed by Asn-318.

This sequence belongs to the glyceraldehyde-3-phosphate dehydrogenase family. Homotetramer.

It localises to the cytoplasm. The enzyme catalyses D-glyceraldehyde 3-phosphate + phosphate + NAD(+) = (2R)-3-phospho-glyceroyl phosphate + NADH + H(+). Its pathway is carbohydrate degradation; glycolysis; pyruvate from D-glyceraldehyde 3-phosphate: step 1/5. Its function is as follows. Key enzyme in glycolysis that catalyzes the first step of the pathway by converting D-glyceraldehyde 3-phosphate (G3P) into 3-phospho-D-glyceroyl phosphate. Essential for the maintenance of cellular ATP levels and carbohydrate metabolism. This chain is Glyceraldehyde-3-phosphate dehydrogenase 1, cytosolic (GAPC), found in Hordeum vulgare (Barley).